The chain runs to 135 residues: ATP synthase epsilon chain (135 aa).

A compositionally biased stretch (basic and acidic residues) spans 89–100 (SGKAEAELEKAK). The disordered stretch occupies residues 89–114 (SGKAEAELEKAKNQLSQNKDQGNSPE). The segment covering 101–112 (NQLSQNKDQGNS) has biased composition (polar residues).

This sequence belongs to the ATPase epsilon chain family. F-type ATPases have 2 components, CF(1) - the catalytic core - and CF(0) - the membrane proton channel. CF(1) has five subunits: alpha(3), beta(3), gamma(1), delta(1), epsilon(1). CF(0) has three main subunits: a, b and c.

Its subcellular location is the cellular thylakoid membrane. Its function is as follows. Produces ATP from ADP in the presence of a proton gradient across the membrane. This Prochlorococcus marinus (strain NATL2A) protein is ATP synthase epsilon chain.